The sequence spans 142 residues: Hemoglobin subunit alpha (142 aa).

A Globin domain is found at 2–142; sequence VLSANDKSNV…VGNVLTSKYR (141 aa). His-59 is an O2 binding site. His-88 is a binding site for heme b.

The protein belongs to the globin family. As to quaternary structure, heterotetramer of two alpha chains and two beta chains. As to expression, red blood cells.

Its function is as follows. Involved in oxygen transport from the lung to the various peripheral tissues. This is Hemoglobin subunit alpha (HBA) from Aptenodytes forsteri (Emperor penguin).